The sequence spans 830 residues: MSRDLRGRGCPRGRGFQGWRGGWRGGWRGGWRGGWRGRTQKVEWKRAPEPASSRLVQSTLDQFIPYKGWKLYFSEAYADKSPFVQKTQAFEKFFMQRIELYDKDEIERKGSILVDYKELIEDRELTKSIPNISTELRDMPQKILQCMGLAIHQVLTKDLERHAAELQVQEGLPLDGEPIINVPLIHARLYNYEPLTQLKNVRANCYGKYIALRGTVVRVSNIKPLCTKLAFVCGTCGDVQSVPLPDGKYTLPTKCLVPECRGRSFTPDRSSPLTATVDWQSVKVQELMSDDQREAGRIPRTIECELVQDLVDSCVPGDVVTITGVVKVSSTEEGASKNKNDKCVFLLYIEANSVSNSKGQKTKNFEEETFQRSFMEFSLKDLYAVQEIQAEENLFRIIVNSLCPAIYGHEIVKAGLALALFGGCQKFVDDKNRIPVRGDPHVLIVGDPGLGKSQMLQAVCNVAPRGVYVCGNTSTSSGLTVTLSRDGASGDFALEAGALVLGDQGICGIDEFDKMGSQHQALLEAMEQQSISLAKAGIVCSLPARTSIVAAANPVGGHYNKAKTVSENLKMGSALLSRFDLVFILLDTPNEDHDHLLSEHVMAIRAGKQAVCSSAVVSRTNVQDRSVLEVVSDRPLLERLKISPGENFDAIPHQLLRKYVGYARQYVHPHLSPEAAQVLQEFYLELRKQNQGASSTPITTRQLESLIRLTEARSRLELREKCTKEDAEDVIEIMKYSMLGTYSDEFGKLDFERSQHGSGMSNRSQAKRFVSALSSIAERTYSNLFDLQQLRQVAKELQIRVFDFESFIESLNDQGYLLKKGSRLYQLQTM.

Residues 394–601 (LFRIIVNSLC…DHDHLLSEHV (208 aa)) enclose the MCM domain. Residue 446–453 (GDPGLGKS) coordinates ATP.

Belongs to the MCM family. As to quaternary structure, component of the MCM8-MCM9 complex, which forms a hexamer composed of MCM8 and MCM9.

Its subcellular location is the nucleus. It carries out the reaction ATP + H2O = ADP + phosphate + H(+). Functionally, component of the MCM8-MCM9 complex, a complex involved in homologous recombination repair following DNA interstrand cross-links and plays a key role during gametogenesis. The MCM8-MCM9 complex probably acts as a hexameric helicase required to process aberrant forks into homologous recombination substrates and to orchestrate homologous recombination with resection, fork stabilization and fork restart. In Gallus gallus (Chicken), this protein is DNA helicase MCM8 (MCM8).